We begin with the raw amino-acid sequence, 315 residues long: Protein translocase subunit SecF (315 aa).

Transmembrane regions (helical) follow at residues 12–32 (AWIV…ISWA), 136–156 (ALFR…IIYL), 166–186 (VFAI…FAIF), 188–208 (LVGG…IIGF), 247–267 (SINT…FGGD), and 271–291 (FFAL…IFMA).

It belongs to the SecD/SecF family. SecF subfamily. Forms a complex with SecD. Part of the essential Sec protein translocation apparatus which comprises SecA, SecYEG and auxiliary proteins SecDF. Other proteins may also be involved.

The protein resides in the cell inner membrane. Its function is as follows. Part of the Sec protein translocase complex. Interacts with the SecYEG preprotein conducting channel. SecDF uses the proton motive force (PMF) to complete protein translocation after the ATP-dependent function of SecA. Probably participates in protein translocation into and across both the cytoplasmic and thylakoid membranes in cyanobacterial cells. This Synechocystis sp. (strain ATCC 27184 / PCC 6803 / Kazusa) protein is Protein translocase subunit SecF.